The primary structure comprises 503 residues: Cell wall integrity and stress response component 2 (503 aa).

The signal sequence occupies residues 1-23 (MHLDLIHKSFILVWLIYIRAALA). Topologically, residues 24-325 (DQFTYKACYS…KGLSGGAIAG (302 aa)) are extracellular. The 94-residue stretch at 25-118 (QFTYKACYSA…SSAMNVYINN (94 aa)) folds into the WSC domain. A disordered region spans residues 124-260 (DSTSSTATST…STPSSTSIGT (137 aa)). A helical membrane pass occupies residues 326-346 (VVVGVVCGTVALLALALFFFV). Topologically, residues 347–503 (WKKRRQSSQH…AKDSNNSSLR (157 aa)) are cytoplasmic. At Thr402 the chain carries Phosphothreonine. Ser455 and Ser458 each carry phosphoserine. Positions 470–503 (IVNPDNVSSNIGSNVSDGDDDYDDAKDSNNSSLR) are disordered.

N-glycosylated.

It is found in the cell membrane. The protein is Cell wall integrity and stress response component 2 (WSC2) of Saccharomyces cerevisiae (strain ATCC 204508 / S288c) (Baker's yeast).